A 156-amino-acid polypeptide reads, in one-letter code: Large ribosomal subunit protein uL23 (156 aa).

The segment covering 1 to 19 has biased composition (basic and acidic residues); sequence MAPKAKKEAPAPPKVEAKA. A disordered region spans residues 1–67; that stretch reads MAPKAKKEAP…PKYPRKSAPR (67 aa). Alanine 2 bears the N,N,N-trimethylalanine mark. Lysine 14 participates in a covalent cross-link: Glycyl lysine isopeptide (Lys-Gly) (interchain with G-Cter in SUMO2). The segment covering 20-67 has biased composition (basic residues); sequence KALKAKKAVLKGVHSHKKKKIRTSPTFRRPKTLRLRRQPKYPRKSAPR. Residues 32–74 form a beta-like import receptor binding (BIB) domain region; that stretch reads VHSHKKKKIRTSPTFRRPKTLRLRRQPKYPRKSAPRRNKLDHY. At arginine 41 the chain carries Citrulline. Serine 43 carries the phosphoserine modification. Threonine 45 carries the post-translational modification Phosphothreonine. An N6-acetyllysine modification is found at lysine 70.

It belongs to the universal ribosomal protein uL23 family. In terms of assembly, component of the large ribosomal subunit. Interacts with LYAR and GNL2. Interacts with MDM2; this interaction may promote MDM2-mediated p53/TP53 polyubiquitination. Directly interacts (via BIB domain) with IPO5, IPO7, KPNB1 and TNPO1; these interactions are involved in RPL23A nuclear import for the assembly of ribosomal subunits. Interacts with IPO8. In terms of processing, N-terminus is methylated by METTL11A/NTM1. Post-translationally, citrullinated by PADI4.

It is found in the cytoplasm. The protein localises to the nucleus. Component of the large ribosomal subunit. The ribosome is a large ribonucleoprotein complex responsible for the synthesis of proteins in the cell. Binds a specific region on the 26S rRNA. May promote p53/TP53 degradation possibly through the stimulation of MDM2-mediated TP53 polyubiquitination. This chain is Large ribosomal subunit protein uL23 (RPL23A), found in Oryctolagus cuniculus (Rabbit).